A 710-amino-acid polypeptide reads, in one-letter code: uncharacterized protein (710 aa).

The interval 1–20 is disordered; sequence MKQRQARLIGTPSQTRRQQE. The stretch at 13 to 42 forms a coiled coil; that stretch reads SQTRRQQELAEKLEKVKEVLEDEKKRQFNE.

Belongs to the IIV-6 268L family.

This is an uncharacterized protein from Invertebrate iridescent virus 6 (IIV-6).